Reading from the N-terminus, the 210-residue chain is Phosphate propanoyltransferase (210 aa).

26-28 (VSN) serves as a coordination point for CoA. The Zn(2+) site is built by H30 and H32. Positions 71 and 78 each coordinate CoA. A phosphate-binding site is contributed by R84. Zn(2+) is bound by residues E90, H138, H140, and H186. N193 is a CoA binding site.

This sequence belongs to the PduL family. In terms of assembly, monomer, when purified in the absence of the encapsulation peptide (EP, residues 1-27). The EP may influence oligomerization. Zn(2+) serves as cofactor.

The protein resides in the bacterial microcompartment. The enzyme catalyses propanoyl-CoA + phosphate = propanoyl phosphate + CoA. It participates in polyol metabolism; 1,2-propanediol degradation. Its function is as follows. Involved in 1,2-propanediol (1,2-PD) utilization in the bacterial microcompartment (BMC) dedicated to 1,2-PD degradation by catalyzing the conversion of propanoyl-CoA to propanoyl-phosphate. Also able to catalyze the reverse reaction. Also has phosphate acetyltransferase activity to a lesser extent. Required for optimal growth on 1,2-PD when the BMC is intact. CoA is regenerated within the BMC (for use by PduP) via this enzyme, although there must also be cofactor transport across the BMC. Directly targeted to the BMC. The 1,2-PD-specific bacterial microcompartment (BMC) concentrates low levels of 1,2-PD catabolic enzymes, concentrates volatile reaction intermediates thus enhancing pathway flux and keeps the level of toxic, mutagenic propionaldehyde low. This chain is Phosphate propanoyltransferase, found in Salmonella typhimurium (strain LT2 / SGSC1412 / ATCC 700720).